The following is a 270-amino-acid chain: Sec-independent protein translocase protein TatC (270 aa).

Helical transmembrane passes span 25-45 (FIAVGVGFVIAYCFKERLFDI), 75-95 (VSLLTGVILATPVLFYEFWMF), 111-131 (VVILSIFFFCVGSSFGYFIVF), 156-176 (LGFASKMLLAFGFVFELPLVL), 195-211 (KYAILIFFTGAALITPP), and 213-233 (VVTQIMMAIPLMILYEISIIG). Positions 243–270 (SDEEEAAENSDVQTDKSTDDTTPGEDQN) are disordered.

It belongs to the TatC family. In terms of assembly, the Tat system comprises two distinct complexes: a TatABC complex, containing multiple copies of TatA, TatB and TatC subunits, and a separate TatA complex, containing only TatA subunits. Substrates initially bind to the TatABC complex, which probably triggers association of the separate TatA complex to form the active translocon.

The protein localises to the cell inner membrane. Its function is as follows. Part of the twin-arginine translocation (Tat) system that transports large folded proteins containing a characteristic twin-arginine motif in their signal peptide across membranes. Together with TatB, TatC is part of a receptor directly interacting with Tat signal peptides. The protein is Sec-independent protein translocase protein TatC of Desulforapulum autotrophicum (strain ATCC 43914 / DSM 3382 / VKM B-1955 / HRM2) (Desulfobacterium autotrophicum).